Consider the following 686-residue polypeptide: DNA ligase 2 (686 aa).

NAD(+)-binding positions include 37–41 (DDEYD), 86–87 (SL), and E121. Catalysis depends on K123, which acts as the N6-AMP-lysine intermediate. Residues R144, E179, K295, and K319 each coordinate NAD(+). Positions 413, 416, 431, and 436 each coordinate Zn(2+). The region spanning 593–681 (VRGEQLAGLN…GVQLPGVQAS (89 aa)) is the BRCT domain.

Belongs to the NAD-dependent DNA ligase family. LigA subfamily. Mg(2+) is required as a cofactor. Mn(2+) serves as cofactor.

The enzyme catalyses NAD(+) + (deoxyribonucleotide)n-3'-hydroxyl + 5'-phospho-(deoxyribonucleotide)m = (deoxyribonucleotide)n+m + AMP + beta-nicotinamide D-nucleotide.. In terms of biological role, DNA ligase that catalyzes the formation of phosphodiester linkages between 5'-phosphoryl and 3'-hydroxyl groups in double-stranded DNA using NAD as a coenzyme and as the energy source for the reaction. It is essential for DNA replication and repair of damaged DNA. The chain is DNA ligase 2 from Deinococcus deserti (strain DSM 17065 / CIP 109153 / LMG 22923 / VCD115).